We begin with the raw amino-acid sequence, 338 residues long: Ketol-acid reductoisomerase (NADP(+)) (338 aa).

The KARI N-terminal Rossmann domain occupies 1-181; it reads MNVFYDKDAD…GGGRAGIIET (181 aa). NADP(+) is bound by residues 24–27, Arg47, and Ser52; that span reads YGSQ. His107 is a catalytic residue. An NADP(+)-binding site is contributed by Gly133. Residues 182 to 327 enclose the KARI C-terminal knotted domain; that stretch reads NFREETETDL…AKLRAMMPWI (146 aa). Positions 190, 194, 226, and 230 each coordinate Mg(2+). Position 251 (Ser251) interacts with substrate.

It belongs to the ketol-acid reductoisomerase family. Mg(2+) serves as cofactor.

The enzyme catalyses (2R)-2,3-dihydroxy-3-methylbutanoate + NADP(+) = (2S)-2-acetolactate + NADPH + H(+). It catalyses the reaction (2R,3R)-2,3-dihydroxy-3-methylpentanoate + NADP(+) = (S)-2-ethyl-2-hydroxy-3-oxobutanoate + NADPH + H(+). It functions in the pathway amino-acid biosynthesis; L-isoleucine biosynthesis; L-isoleucine from 2-oxobutanoate: step 2/4. The protein operates within amino-acid biosynthesis; L-valine biosynthesis; L-valine from pyruvate: step 2/4. Its function is as follows. Involved in the biosynthesis of branched-chain amino acids (BCAA). Catalyzes an alkyl-migration followed by a ketol-acid reduction of (S)-2-acetolactate (S2AL) to yield (R)-2,3-dihydroxy-isovalerate. In the isomerase reaction, S2AL is rearranged via a Mg-dependent methyl migration to produce 3-hydroxy-3-methyl-2-ketobutyrate (HMKB). In the reductase reaction, this 2-ketoacid undergoes a metal-dependent reduction by NADPH to yield (R)-2,3-dihydroxy-isovalerate. The chain is Ketol-acid reductoisomerase (NADP(+)) from Burkholderia cenocepacia (strain ATCC BAA-245 / DSM 16553 / LMG 16656 / NCTC 13227 / J2315 / CF5610) (Burkholderia cepacia (strain J2315)).